The sequence spans 582 residues: Hydrazine dehydrogenase (582 aa).

Residues 1-32 form the signal peptide; it reads MRKFLKVTLASALIGCGVIGTVSSLMVKEAKA. Residues cysteine 121, cysteine 124, histidine 125, histidine 141, cysteine 151, cysteine 154, histidine 155, histidine 159, cysteine 170, cysteine 175, histidine 176, histidine 191, cysteine 216, cysteine 219, histidine 220, cysteine 227, cysteine 230, histidine 231, histidine 234, cysteine 247, cysteine 250, histidine 251, histidine 267, cysteine 297, cysteine 300, histidine 301, histidine 306, cysteine 342, cysteine 345, histidine 346, histidine 454, and tyrosine 462 each coordinate heme c. Residues 561 to 582 form a disordered region; the sequence is GSHSAHHHESGHDPAARSMKEH. The segment covering 567–582 has biased composition (basic and acidic residues); the sequence is HHESGHDPAARSMKEH.

Homotrimer; subunits are linked by two covalent bonds between Tyr-462 of one subunit and heme P460 of an adjacent subunit. May form 24-mer of an octamer of trimers. It depends on heme c as a cofactor.

It localises to the anammoxosome. It carries out the reaction hydrazine + 4 Fe(III)-[cytochrome c] = N2 + 4 Fe(II)-[cytochrome c] + 4 H(+). Its pathway is nitrogen metabolism. Is strongly and competitively inhibited by NO and hydroxylamine. Its function is as follows. Catalyzes the four-electron oxidation of hydrazine to N2. The electrons derived from hydrazine oxidation may be transferred to the quinone pool and exploited to promote the generation of proton-motive force (pmf) across the anammoxosome membrane. Is involved in anaerobic ammonium oxidation (anammox), a biological process in which nitrite is used as the electron acceptor in the conversion of ammonium to dinitrogen gas (N2) and water; this bacterial process has a major role in the Earth's nitrogen cycle and has been estimated to synthesize up to 50% of the dinitrogen gas emitted into our atmosphere from the oceans. Cannot oxidize hydroxylamine to NO. This chain is Hydrazine dehydrogenase, found in Kuenenia stuttgartiensis.